We begin with the raw amino-acid sequence, 747 residues long: Endoglucanase C (747 aa).

A signal peptide spans 1–37 (MGHVTSPSKRYPASFKRAGSILGVSIALAAFSNVAAA). Residues 38 to 136 (GCEYVVTNSW…TVNGAACTGG (99 aa)) form the CBM2 domain. 3 disulfides stabilise this stretch: cysteine 39–cysteine 133, cysteine 183–cysteine 214, and cysteine 193–cysteine 208. Residues 182–211 (QCNWYGTLYPLCVSTTSGWGYENNRSCISP) form the CBM10 domain. The interval 226–283 (GSSSPSSISSSSVRSSSSSSVVPPSSSSSSSVPSSSSSSVSSSSVVSSSSSSVSVPGT) is disordered. The span at 227–281 (SSSPSSISSSSVRSSSSSSVVPPSSSSSSSVPSSSSSSVSSSSVVSSSSSSVSVP) shows a compositional bias: low complexity. The interval 280-747 (VPGTGVFRVN…TQLLHNMWGL (468 aa)) is catalytic. Glutamate 502 acts as the Proton donor in catalysis. Residue glutamate 652 is the Nucleophile of the active site.

It belongs to the glycosyl hydrolase 5 (cellulase A) family.

The enzyme catalyses Endohydrolysis of (1-&gt;4)-beta-D-glucosidic linkages in cellulose, lichenin and cereal beta-D-glucans.. This Cellvibrio japonicus (strain Ueda107) (Pseudomonas fluorescens subsp. cellulosa) protein is Endoglucanase C (celC).